The primary structure comprises 877 residues: Alanine--tRNA ligase (877 aa).

Zn(2+)-binding residues include His-567, His-571, Cys-669, and His-673.

It belongs to the class-II aminoacyl-tRNA synthetase family. It depends on Zn(2+) as a cofactor.

The protein localises to the cytoplasm. The enzyme catalyses tRNA(Ala) + L-alanine + ATP = L-alanyl-tRNA(Ala) + AMP + diphosphate. Functionally, catalyzes the attachment of alanine to tRNA(Ala) in a two-step reaction: alanine is first activated by ATP to form Ala-AMP and then transferred to the acceptor end of tRNA(Ala). Also edits incorrectly charged Ser-tRNA(Ala) and Gly-tRNA(Ala) via its editing domain. This Rickettsia rickettsii (strain Iowa) protein is Alanine--tRNA ligase.